Consider the following 229-residue polypeptide: MSVSLSRLERQLGYTFKDQELMVLALTHRSFAGRNNERLEFLGDAILNFVAGEALFERFPQAREGQLSRLRARLVKGETLALLARGFDLGEYLRLGSGELKSGGFRRESILADALEALIGAIYLDAGMEAARERVLAWLTTEFDSLTLVDTNKDPKTRLQEFLQSRACELPRYEVVDIQGEPHCRTFFVECEINLLNEKSRGQGVSRRIAEQVAAAAALIALGVENGHE.

In terms of domain architecture, RNase III spans leucine 5–glycine 127. Glutamate 40 provides a ligand contact to Mg(2+). The active site involves aspartate 44. Aspartate 113 and glutamate 116 together coordinate Mg(2+). Residue glutamate 116 is part of the active site. Residues aspartate 154 to valine 224 form the DRBM domain.

It belongs to the ribonuclease III family. Homodimer. It depends on Mg(2+) as a cofactor.

Its subcellular location is the cytoplasm. The enzyme catalyses Endonucleolytic cleavage to 5'-phosphomonoester.. In terms of biological role, digests double-stranded RNA. Involved in the processing of primary rRNA transcript to yield the immediate precursors to the large and small rRNAs (23S and 16S). Processes some mRNAs, and tRNAs when they are encoded in the rRNA operon. Processes pre-crRNA and tracrRNA of type II CRISPR loci if present in the organism. The sequence is that of Ribonuclease 3 from Pseudomonas syringae pv. syringae (strain B728a).